The following is a 688-amino-acid chain: Small ribosomal subunit protein mS39 (688 aa).

A mitochondrion-targeting transit peptide spans 1-37; it reads MASVASARWLRVSCGLCVPLTARRAGPCGRTPSSRFY. Residue lysine 126 is modified to N6-acetyllysine. PPR repeat units lie at residues 149-183, 184-219, 258-292, 293-333, 334-370, 371-412, 415-449, 457-491, 492-526, and 575-609; these read IEEISEAALQERIKLKKVKASVDIFDQLLQAGTTV, SLETTNSLLDLLCYYGNQEPSTNYNFQQHEQTEELE, NAHSYCTMIRGMVKHRAHTQALSMYTELLNNRLRA, DVHT…NVKP, NLQTFNTILKCLRRFYAFGKLPALQTFREMKAIGIEP, SLAT…SPKD, DDMFFQSAMRVCSSLRDLELAYQVHGLLNTGDNRK, RNFYYSKFFSLLCLMEQIDVTLKWYKDLIPSVFFP, HSQTLIDLLQALDVANRLEMIPQIWKDSKEYGHTF, and PANSLNYIAILFLRAGRTQEAWKMLGLFRKHNKIP. Positions 667 to 688 are disordered; the sequence is GDLTALTSDSESDSDSDTSKDK.

This sequence belongs to the mitochondrion-specific ribosomal protein mS39 family. As to quaternary structure, component of the mitochondrial ribosome small subunit (28S) which comprises a 12S rRNA and about 30 distinct proteins. Associated with the 12S mitochondrial rRNA (12S mt-rRNA).

The protein resides in the mitochondrion. In terms of biological role, mitochondrial RNA-binding protein that has a role in mitochondrial translation. This is Small ribosomal subunit protein mS39 (PTCD3) from Bos taurus (Bovine).